The following is a 376-amino-acid chain: Ribonucleoside-diphosphate reductase 1 subunit beta (376 aa).

Fe cation contacts are provided by Asp-85, Glu-116, and His-119. The active site involves Tyr-123. The Fe cation site is built by Glu-205, Glu-239, and His-242.

It belongs to the ribonucleoside diphosphate reductase small chain family. Tetramer of two alpha (R1) and two beta (R2) subunits. The B1 protein is a dimer of alpha subunits. A radical transfer pathway occurs between Tyr-123 of R2 and R1. Fe cation serves as cofactor.

The catalysed reaction is a 2'-deoxyribonucleoside 5'-diphosphate + [thioredoxin]-disulfide + H2O = a ribonucleoside 5'-diphosphate + [thioredoxin]-dithiol. Provides the precursors necessary for DNA synthesis. Catalyzes the biosynthesis of deoxyribonucleotides from the corresponding ribonucleotides. R2 contains the tyrosyl radical required for catalysis. The sequence is that of Ribonucleoside-diphosphate reductase 1 subunit beta (nrdB) from Salmonella typhimurium (strain LT2 / SGSC1412 / ATCC 700720).